The chain runs to 740 residues: Anaphase-promoting complex subunit 5 (740 aa).

The residue at position 180 (serine 180) is a Phosphoserine. 13 TPR repeats span residues 194–234, 235–285, 286–322, 323–363, 364–403, 404–451, 452–485, 486–525, 526–565, 566–605, 606–645, 646–681, and 682–721; these read QKQA…FNPD, FAEA…GRSL, RYAA…SNDH, VCLQ…YLAS, LGIQ…SELI, DISI…TESF, AVAL…FPPN, SQHA…ALNG, IEGV…TEMV, ISVL…QYLA, SETV…VLDK, GRAM…NLSE, and AKNY…CAMI. Threonine 217 is modified (phosphothreonine).

Belongs to the APC5 family. The mammalian APC/C is composed at least of 14 distinct subunits ANAPC1, ANAPC2, CDC27/APC3, ANAPC4, ANAPC5, CDC16/APC6, ANAPC7, CDC23/APC8, ANAPC10, ANAPC11, CDC26/APC12, ANAPC13, ANAPC15 and ANAPC16 that assemble into a complex of at least 19 chains with a combined molecular mass of around 1.2 MDa; APC/C interacts with FZR1 and FBXO5.

It is found in the nucleus. The protein localises to the cytoplasm. Its subcellular location is the cytoskeleton. It localises to the spindle. The protein operates within protein modification; protein ubiquitination. Its function is as follows. Component of the anaphase promoting complex/cyclosome (APC/C), a cell cycle-regulated E3 ubiquitin ligase that controls progression through mitosis and the G1 phase of the cell cycle. The APC/C complex acts by mediating ubiquitination and subsequent degradation of target proteins: it mainly mediates the formation of 'Lys-11'-linked polyubiquitin chains and, to a lower extent, the formation of 'Lys-48'- and 'Lys-63'-linked polyubiquitin chains. The APC/C complex catalyzes assembly of branched 'Lys-11'-/'Lys-48'-linked branched ubiquitin chains on target proteins. This is Anaphase-promoting complex subunit 5 (Anapc5) from Mus musculus (Mouse).